The primary structure comprises 102 residues: RNA-binding protein Hfq (102 aa).

Residues 9-68 (DPFLNALRRERVPVSIYLVNGIKLQGQIESFDQFVILLKNTVSQMVYKHAISTVVPSRPV) form the Sm domain. The disordered stretch occupies residues 63–102 (VPSRPVSHHSNNAGGGTSNNYHHGSNAQGSGAQQDSEETE). Polar residues predominate over residues 70-96 (HHSNNAGGGTSNNYHHGSNAQGSGAQQ).

It belongs to the Hfq family. In terms of assembly, homohexamer.

RNA chaperone that binds small regulatory RNA (sRNAs) and mRNAs to facilitate mRNA translational regulation in response to envelope stress, environmental stress and changes in metabolite concentrations. Also binds with high specificity to tRNAs. In Salmonella arizonae (strain ATCC BAA-731 / CDC346-86 / RSK2980), this protein is RNA-binding protein Hfq.